A 454-amino-acid polypeptide reads, in one-letter code: Bifunctional protein GlmU (454 aa).

The interval 1–227 is pyrophosphorylase; the sequence is MKKLSVVILA…KMEVEGANNR (227 aa). Residues 9–12, K23, Q74, 79–80, 101–103, G138, E152, N167, and N225 each bind UDP-N-acetyl-alpha-D-glucosamine; these read LAAG, GT, and YGD. D103 contacts Mg(2+). N225 is a Mg(2+) binding site. The segment at 228–248 is linker; sequence LQLAALERYYQHKQAERLLLE. The segment at 249-454 is N-acetyltransferase; that stretch reads GVMLIDPARF…AGWQRPTKKK (206 aa). UDP-N-acetyl-alpha-D-glucosamine is bound by residues R331 and K349. H361 serves as the catalytic Proton acceptor. The UDP-N-acetyl-alpha-D-glucosamine site is built by Y364 and N375. Residues A378, 384-385, S403, A421, and R438 each bind acetyl-CoA; that span reads NY.

This sequence in the N-terminal section; belongs to the N-acetylglucosamine-1-phosphate uridyltransferase family. It in the C-terminal section; belongs to the transferase hexapeptide repeat family. In terms of assembly, homotrimer. Mg(2+) is required as a cofactor.

It is found in the cytoplasm. The catalysed reaction is alpha-D-glucosamine 1-phosphate + acetyl-CoA = N-acetyl-alpha-D-glucosamine 1-phosphate + CoA + H(+). The enzyme catalyses N-acetyl-alpha-D-glucosamine 1-phosphate + UTP + H(+) = UDP-N-acetyl-alpha-D-glucosamine + diphosphate. It participates in nucleotide-sugar biosynthesis; UDP-N-acetyl-alpha-D-glucosamine biosynthesis; N-acetyl-alpha-D-glucosamine 1-phosphate from alpha-D-glucosamine 6-phosphate (route II): step 2/2. Its pathway is nucleotide-sugar biosynthesis; UDP-N-acetyl-alpha-D-glucosamine biosynthesis; UDP-N-acetyl-alpha-D-glucosamine from N-acetyl-alpha-D-glucosamine 1-phosphate: step 1/1. It functions in the pathway bacterial outer membrane biogenesis; LPS lipid A biosynthesis. Catalyzes the last two sequential reactions in the de novo biosynthetic pathway for UDP-N-acetylglucosamine (UDP-GlcNAc). The C-terminal domain catalyzes the transfer of acetyl group from acetyl coenzyme A to glucosamine-1-phosphate (GlcN-1-P) to produce N-acetylglucosamine-1-phosphate (GlcNAc-1-P), which is converted into UDP-GlcNAc by the transfer of uridine 5-monophosphate (from uridine 5-triphosphate), a reaction catalyzed by the N-terminal domain. This Mannheimia succiniciproducens (strain KCTC 0769BP / MBEL55E) protein is Bifunctional protein GlmU.